Reading from the N-terminus, the 210-residue chain is Ribosomal RNA small subunit methyltransferase G (210 aa).

Residues G76, L81, 127 to 128, and R142 each bind S-adenosyl-L-methionine; that span reads VE.

This sequence belongs to the methyltransferase superfamily. RNA methyltransferase RsmG family.

It is found in the cytoplasm. It carries out the reaction guanosine(527) in 16S rRNA + S-adenosyl-L-methionine = N(7)-methylguanosine(527) in 16S rRNA + S-adenosyl-L-homocysteine. Its function is as follows. Specifically methylates the N7 position of guanine in position 527 of 16S rRNA. The sequence is that of Ribosomal RNA small subunit methyltransferase G from Aliivibrio fischeri (strain ATCC 700601 / ES114) (Vibrio fischeri).